Here is a 443-residue protein sequence, read N- to C-terminus: Xaa-Pro dipeptidase (443 aa).

D246, D257, H339, E384, and E423 together coordinate Mn(2+).

The protein belongs to the peptidase M24B family. Bacterial-type prolidase subfamily. Mn(2+) serves as cofactor.

The enzyme catalyses Xaa-L-Pro dipeptide + H2O = an L-alpha-amino acid + L-proline. Its function is as follows. Splits dipeptides with a prolyl residue in the C-terminal position. The protein is Xaa-Pro dipeptidase of Klebsiella pneumoniae (strain 342).